Here is a 345-residue protein sequence, read N- to C-terminus: Biotin synthase (345 aa).

A Radical SAM core domain is found at 38–256; sequence QQVQVSTLLS…IAVARIMMPS (219 aa). 3 residues coordinate [4Fe-4S] cluster: cysteine 53, cysteine 57, and cysteine 60. Residues cysteine 97, cysteine 128, cysteine 188, and arginine 260 each contribute to the [2Fe-2S] cluster site.

This sequence belongs to the radical SAM superfamily. Biotin synthase family. As to quaternary structure, homodimer. Requires [4Fe-4S] cluster as cofactor. The cofactor is [2Fe-2S] cluster.

The catalysed reaction is (4R,5S)-dethiobiotin + (sulfur carrier)-SH + 2 reduced [2Fe-2S]-[ferredoxin] + 2 S-adenosyl-L-methionine = (sulfur carrier)-H + biotin + 2 5'-deoxyadenosine + 2 L-methionine + 2 oxidized [2Fe-2S]-[ferredoxin]. It participates in cofactor biosynthesis; biotin biosynthesis; biotin from 7,8-diaminononanoate: step 2/2. Functionally, catalyzes the conversion of dethiobiotin (DTB) to biotin by the insertion of a sulfur atom into dethiobiotin via a radical-based mechanism. This is Biotin synthase from Photorhabdus laumondii subsp. laumondii (strain DSM 15139 / CIP 105565 / TT01) (Photorhabdus luminescens subsp. laumondii).